Here is a 409-residue protein sequence, read N- to C-terminus: Cobalt-precorrin-5B C(1)-methyltransferase (409 aa).

It belongs to the CbiD family.

The enzyme catalyses Co-precorrin-5B + S-adenosyl-L-methionine = Co-precorrin-6A + S-adenosyl-L-homocysteine. It functions in the pathway cofactor biosynthesis; adenosylcobalamin biosynthesis; cob(II)yrinate a,c-diamide from sirohydrochlorin (anaerobic route): step 6/10. In terms of biological role, catalyzes the methylation of C-1 in cobalt-precorrin-5B to form cobalt-precorrin-6A. The protein is Cobalt-precorrin-5B C(1)-methyltransferase of Methanopyrus kandleri (strain AV19 / DSM 6324 / JCM 9639 / NBRC 100938).